A 435-amino-acid polypeptide reads, in one-letter code: Glutamyl-tRNA reductase (435 aa).

Residues 49–52, serine 109, 114–116, and glutamine 120 contribute to the substrate site; these read TCNR and EGQ. Cysteine 50 functions as the Nucleophile in the catalytic mechanism. 198–203 provides a ligand contact to NADP(+); the sequence is GAGRMS.

This sequence belongs to the glutamyl-tRNA reductase family. In terms of assembly, homodimer.

The enzyme catalyses (S)-4-amino-5-oxopentanoate + tRNA(Glu) + NADP(+) = L-glutamyl-tRNA(Glu) + NADPH + H(+). The protein operates within porphyrin-containing compound metabolism; protoporphyrin-IX biosynthesis; 5-aminolevulinate from L-glutamyl-tRNA(Glu): step 1/2. It participates in porphyrin-containing compound metabolism; chlorophyll biosynthesis. Catalyzes the NADPH-dependent reduction of glutamyl-tRNA(Glu) to glutamate 1-semialdehyde (GSA). The chain is Glutamyl-tRNA reductase from Prochlorococcus marinus (strain MIT 9515).